The chain runs to 147 residues: Hemoglobin subunit epsilon-1 (147 aa).

The Globin domain maps to 3–147; that stretch reads HFTAEEKAAI…VATALAHKYH (145 aa). The heme b site is built by His64 and His93.

This sequence belongs to the globin family. In terms of assembly, heterotetramer of two epsilon chains and two alpha chains. In terms of tissue distribution, red blood cells.

In terms of biological role, beta-type chain found in early embryos. The polypeptide is Hemoglobin subunit epsilon-1 (HBE1) (Capra hircus (Goat)).